The following is a 264-amino-acid chain: Acyl-[acyl-carrier-protein]--UDP-N-acetylglucosamine O-acyltransferase (264 aa).

It belongs to the transferase hexapeptide repeat family. LpxA subfamily. In terms of assembly, homotrimer.

Its subcellular location is the cytoplasm. The enzyme catalyses a (3R)-hydroxyacyl-[ACP] + UDP-N-acetyl-alpha-D-glucosamine = a UDP-3-O-[(3R)-3-hydroxyacyl]-N-acetyl-alpha-D-glucosamine + holo-[ACP]. Its pathway is glycolipid biosynthesis; lipid IV(A) biosynthesis; lipid IV(A) from (3R)-3-hydroxytetradecanoyl-[acyl-carrier-protein] and UDP-N-acetyl-alpha-D-glucosamine: step 1/6. In terms of biological role, involved in the biosynthesis of lipid A, a phosphorylated glycolipid that anchors the lipopolysaccharide to the outer membrane of the cell. This chain is Acyl-[acyl-carrier-protein]--UDP-N-acetylglucosamine O-acyltransferase, found in Rickettsia conorii (strain ATCC VR-613 / Malish 7).